Consider the following 122-residue polypeptide: Large ribosomal subunit protein uL14 (122 aa).

Belongs to the universal ribosomal protein uL14 family. As to quaternary structure, part of the 50S ribosomal subunit. Forms a cluster with proteins L3 and L19. In the 70S ribosome, L14 and L19 interact and together make contacts with the 16S rRNA in bridges B5 and B8.

Its function is as follows. Binds to 23S rRNA. Forms part of two intersubunit bridges in the 70S ribosome. This chain is Large ribosomal subunit protein uL14, found in Mycoplasma pneumoniae (strain ATCC 29342 / M129 / Subtype 1) (Mycoplasmoides pneumoniae).